The sequence spans 115 residues: Large ribosomal subunit protein bL20 (115 aa).

This sequence belongs to the bacterial ribosomal protein bL20 family.

Its function is as follows. Binds directly to 23S ribosomal RNA and is necessary for the in vitro assembly process of the 50S ribosomal subunit. It is not involved in the protein synthesizing functions of that subunit. This is Large ribosomal subunit protein bL20 from Microcystis aeruginosa (strain NIES-843 / IAM M-2473).